The sequence spans 279 residues: DegV domain-containing protein lin1977 (279 aa).

The 275-residue stretch at 4-278 (IKIITDSTAG…TGAFAFMYYT (275 aa)) folds into the DegV domain. Residues S62 and S94 each coordinate hexadecanoate.

In terms of biological role, may bind long-chain fatty acids, such as palmitate, and may play a role in lipid transport or fatty acid metabolism. This Listeria innocua serovar 6a (strain ATCC BAA-680 / CLIP 11262) protein is DegV domain-containing protein lin1977.